A 515-amino-acid polypeptide reads, in one-letter code: Maturase K (515 aa).

It belongs to the intron maturase 2 family. MatK subfamily.

It localises to the plastid. The protein resides in the chloroplast. Usually encoded in the trnK tRNA gene intron. Probably assists in splicing its own and other chloroplast group II introns. The sequence is that of Maturase K from Zingiber officinale (Ginger).